A 249-amino-acid polypeptide reads, in one-letter code: Proteasome subunit alpha type-7 (249 aa).

Belongs to the peptidase T1A family. In terms of assembly, the 26S proteasome consists of a 20S proteasome core and two 19S regulatory subunits. The 20S proteasome core is composed of 28 subunits that are arranged in four stacked rings, resulting in a barrel-shaped structure. The two end rings are each formed by seven alpha subunits, and the two central rings are each formed by seven beta subunits. The catalytic chamber with the active sites is on the inside of the barrel.

The protein resides in the cytoplasm. Its subcellular location is the nucleus. Functionally, the proteasome is a multicatalytic proteinase complex which is characterized by its ability to cleave peptides with Arg, Phe, Tyr, Leu, and Glu adjacent to the leaving group at neutral or slightly basic pH. The proteasome has an ATP-dependent proteolytic activity. In Cicer arietinum (Chickpea), this protein is Proteasome subunit alpha type-7 (PAD1).